The chain runs to 989 residues: Phosphoenolpyruvate carboxylase (989 aa).

Catalysis depends on residues H175 and K630.

The protein belongs to the PEPCase type 1 family. Mg(2+) is required as a cofactor.

It catalyses the reaction oxaloacetate + phosphate = phosphoenolpyruvate + hydrogencarbonate. Forms oxaloacetate, a four-carbon dicarboxylic acid source for the tricarboxylic acid cycle. In Prochlorococcus marinus (strain MIT 9301), this protein is Phosphoenolpyruvate carboxylase.